Consider the following 135-residue polypeptide: MIVRDLAKEILTDRRVDSDGWSSVRLLLKDDGMGFSFHITTIHAGAELHMHYKNHLESVFCMEGTGSITDLATGETHEIRPGVMYALNKNDKHILRANAGAPMMMACVFNPPVTGKEVHGEDGAYPADAALENSA.

It belongs to the ectoine synthase family.

The catalysed reaction is (2S)-4-acetamido-2-aminobutanoate = L-ectoine + H2O. Its pathway is amine and polyamine biosynthesis; ectoine biosynthesis; L-ectoine from L-aspartate 4-semialdehyde: step 3/3. Functionally, catalyzes the circularization of gamma-N-acetyl-alpha,gamma-diaminobutyric acid (ADABA) to ectoine (1,4,5,6-tetrahydro-2-methyl-4-pyrimidine carboxylic acid), which is an excellent osmoprotectant. The chain is L-ectoine synthase from Hyphomonas neptunium (strain ATCC 15444).